A 155-amino-acid chain; its full sequence is MTKKKSSGGALIAQNKKARHLYELLEFFEAGIALAGTEVKSLRAGQVSFTDSYVTIHNNEAWIVGMHIAPYANAGYVQHDPDRDRKLLLHAREIDTLRARVEQKGLTVVPVKLYFKNSRVKLEIAVGRGKKLHDKRQDIKQRDVERETRREIMRH.

Residues 135-155 are disordered; the sequence is KRQDIKQRDVERETRREIMRH.

Belongs to the SmpB family.

Its subcellular location is the cytoplasm. Its function is as follows. Required for rescue of stalled ribosomes mediated by trans-translation. Binds to transfer-messenger RNA (tmRNA), required for stable association of tmRNA with ribosomes. tmRNA and SmpB together mimic tRNA shape, replacing the anticodon stem-loop with SmpB. tmRNA is encoded by the ssrA gene; the 2 termini fold to resemble tRNA(Ala) and it encodes a 'tag peptide', a short internal open reading frame. During trans-translation Ala-aminoacylated tmRNA acts like a tRNA, entering the A-site of stalled ribosomes, displacing the stalled mRNA. The ribosome then switches to translate the ORF on the tmRNA; the nascent peptide is terminated with the 'tag peptide' encoded by the tmRNA and targeted for degradation. The ribosome is freed to recommence translation, which seems to be the essential function of trans-translation. This is SsrA-binding protein from Oleidesulfovibrio alaskensis (strain ATCC BAA-1058 / DSM 17464 / G20) (Desulfovibrio alaskensis).